The chain runs to 222 residues: Pyrrolidone-carboxylate peptidase (222 aa).

Catalysis depends on residues E80, C146, and H170.

Belongs to the peptidase C15 family. As to quaternary structure, homotetramer.

Its subcellular location is the cytoplasm. The enzyme catalyses Release of an N-terminal pyroglutamyl group from a polypeptide, the second amino acid generally not being Pro.. Its function is as follows. Removes 5-oxoproline from various penultimate amino acid residues except L-proline. This chain is Pyrrolidone-carboxylate peptidase, found in Mycobacterium marinum (strain ATCC BAA-535 / M).